Here is a 258-residue protein sequence, read N- to C-terminus: Protein U52 (258 aa).

This sequence belongs to the herpesviridae UL79 family.

The protein is Protein U52 (U52) of Human herpesvirus 6B (strain Z29) (HHV-6 variant B).